Here is a 353-residue protein sequence, read N- to C-terminus: S-adenosylmethionine:tRNA ribosyltransferase-isomerase (353 aa).

Belongs to the QueA family. As to quaternary structure, monomer.

It is found in the cytoplasm. The enzyme catalyses 7-aminomethyl-7-carbaguanosine(34) in tRNA + S-adenosyl-L-methionine = epoxyqueuosine(34) in tRNA + adenine + L-methionine + 2 H(+). The protein operates within tRNA modification; tRNA-queuosine biosynthesis. In terms of biological role, transfers and isomerizes the ribose moiety from AdoMet to the 7-aminomethyl group of 7-deazaguanine (preQ1-tRNA) to give epoxyqueuosine (oQ-tRNA). This chain is S-adenosylmethionine:tRNA ribosyltransferase-isomerase, found in Maricaulis maris (strain MCS10) (Caulobacter maris).